The sequence spans 426 residues: LIM/homeobox protein Lhx2 (426 aa).

Positions 14 to 24 (VIDEMDRRQER) are enriched in basic and acidic residues. The tract at residues 14 to 42 (VIDEMDRRQERGSGISSAIDRGDTETTMP) is disordered. LIM zinc-binding domains lie at 52-104 (CAGC…CKED) and 114-167 (CARC…CRLH). Residues 248 to 268 (DAEHLDRDQPYPSSQKTKRMR) are disordered. A DNA-binding region (homeobox) is located at residues 264–323 (TKRMRTSFKHHQLRTMKSYFAINHNPDAKDLKQLAQKTGLTKRVLQVWFQNARAKFRRNL). Positions 305 to 321 (KRVLQVWFQNARAKFRR) match the Nuclear localization signal motif. The span at 326–354 (QENTGVDKTSDATLQTGTPSGPASELSNA) shows a compositional bias: polar residues. A disordered region spans residues 326 to 370 (QENTGVDKTSDATLQTGTPSGPASELSNASLSPSSTPTTLTDLTS). The segment covering 355–370 (SLSPSSTPTTLTDLTS) has biased composition (low complexity).

Interacts (via LIM domains) with CITED2. Interacts with POU4F2. As to expression, found in discrete regions of the developing CNS, primarily in diencephalic and telencephalic structures and a subset of lymphoid tissues. Also found in embryonic spinal cord and fetal liver.

The protein resides in the nucleus. Acts as a transcriptional activator. Stimulates the promoter of the alpha-glycoprotein gene. Transcriptional regulatory protein involved in the control of cell differentiation in developing lymphoid and neural cell types. The protein is LIM/homeobox protein Lhx2 (Lhx2) of Rattus norvegicus (Rat).